We begin with the raw amino-acid sequence, 104 residues long: Ribonuclease P protein component 4 (104 aa).

Residues cysteine 63, cysteine 66, cysteine 89, and cysteine 92 each coordinate Zn(2+).

Belongs to the eukaryotic/archaeal RNase P protein component 4 family. As to quaternary structure, consists of a catalytic RNA component and at least 4-5 protein subunits. It depends on Zn(2+) as a cofactor.

It is found in the cytoplasm. It catalyses the reaction Endonucleolytic cleavage of RNA, removing 5'-extranucleotides from tRNA precursor.. Part of ribonuclease P, a protein complex that generates mature tRNA molecules by cleaving their 5'-ends. The chain is Ribonuclease P protein component 4 from Methanoregula boonei (strain DSM 21154 / JCM 14090 / 6A8).